The chain runs to 63 residues: Frenatin 1.1 (63 aa).

Positions 1-22 (MAFLKKSLFLVLFLGLVSLSIC) are cleaved as a signal peptide. A propeptide spanning residues 23–49 (EKEKKEQEDEDENEEEKESEEGSEEKR) is cleaved from the precursor. The interval 25–63 (EKKEQEDEDENEEEKESEEGSEEKRGLLDTLGGILGLGR) is disordered. The segment covering 30–45 (EDEDENEEEKESEEGS) has biased composition (acidic residues). Residue Leu61 is modified to Leucine amide.

In terms of tissue distribution, expressed by the skin glands.

Its subcellular location is the secreted. Functionally, antimicrobial peptide with selective activity. Is only active against Micrococcus luteus (MIC=25 ug/ml) and not against Bacillus cereus, Escherichia coli, Leuconostoc mesenteroides, Micrococcus luteus, Pastewella haemolytica, Staphylococcus aureus, Streptococcus faecalis and Streptococcus uberis. This chain is Frenatin 1.1, found in Nyctimystes infrafrenatus (White-lipped tree frog).